The following is a 117-amino-acid chain: UPF0102 protein Swoo_0351 (117 aa).

The protein belongs to the UPF0102 family.

The protein is UPF0102 protein Swoo_0351 of Shewanella woodyi (strain ATCC 51908 / MS32).